A 117-amino-acid polypeptide reads, in one-letter code: Large ribosomal subunit protein bL20c (117 aa).

It belongs to the bacterial ribosomal protein bL20 family.

The protein localises to the plastid. Its subcellular location is the chloroplast. Binds directly to 23S ribosomal RNA and is necessary for the in vitro assembly process of the 50S ribosomal subunit. It is not involved in the protein synthesizing functions of that subunit. In Chloranthus spicatus (Chulantree), this protein is Large ribosomal subunit protein bL20c.